A 233-amino-acid polypeptide reads, in one-letter code: Putative 26S proteasome non-ATPase regulatory subunit 8 homolog B (233 aa).

Methionine 1 carries the post-translational modification N-acetylmethionine. The 180-residue stretch at 38 to 217 (DHYLISLSLN…APCKEIPSLQ (180 aa)) folds into the PCI domain.

Belongs to the proteasome subunit S14 family. As to quaternary structure, component of the 19S regulatory particle (RP/PA700) lid subcomplex of the 26S proteasome. The 26S proteasome is composed of a core protease (CP), known as the 20S proteasome, capped at one or both ends by the 19S regulatory particle (RP/PA700). The RP/PA700 complex is composed of at least 17 different subunits in two subcomplexes, the base and the lid, which form the portions proximal and distal to the 20S proteolytic core, respectively. Interacts with UCH1 and UCH2.

Acts as a regulatory subunit of the 26S proteasome which is involved in the ATP-dependent degradation of ubiquitinated proteins. The chain is Putative 26S proteasome non-ATPase regulatory subunit 8 homolog B from Arabidopsis thaliana (Mouse-ear cress).